Reading from the N-terminus, the 469-residue chain is Tetratricopeptide repeat protein 38 (469 aa).

A2 carries the N-acetylalanine modification. At S5 the chain carries Phosphoserine. TPR repeat units follow at residues 108–141 (REQLHVSAVETFAKGNFPKACELWEQILQDHPTD), 180–213 (SYVKGIYSFGLMETNFYDQAEKLAKEALSINPTD), and 252–285 (CHNYWHWALYLIEKGEYEAALTIYDTHILPSLQA).

The protein belongs to the TTC38 family.

The protein is Tetratricopeptide repeat protein 38 (TTC38) of Pongo abelii (Sumatran orangutan).